The primary structure comprises 88 residues: UPF0297 protein YrzL (88 aa).

Belongs to the UPF0297 family.

This Bacillus subtilis (strain 168) protein is UPF0297 protein YrzL (yrzL).